Consider the following 106-residue polypeptide: Iron-sulfur cluster assembly protein CyaY (106 aa).

It belongs to the frataxin family.

Involved in iron-sulfur (Fe-S) cluster assembly. May act as a regulator of Fe-S biogenesis. The polypeptide is Iron-sulfur cluster assembly protein CyaY (Escherichia coli O7:K1 (strain IAI39 / ExPEC)).